The sequence spans 81 residues: ATP synthase subunit c, chloroplastic (81 aa).

2 helical membrane-spanning segments follow: residues 7–27 (AASVIAAGLAVGLASIGPGIG) and 57–77 (LAFMEALTIYGLVVALALLFA).

Belongs to the ATPase C chain family. In terms of assembly, F-type ATPases have 2 components, F(1) - the catalytic core - and F(0) - the membrane proton channel. F(1) has five subunits: alpha(3), beta(3), gamma(1), delta(1), epsilon(1). F(0) has four main subunits: a(1), b(1), b'(1) and c(10-14). The alpha and beta chains form an alternating ring which encloses part of the gamma chain. F(1) is attached to F(0) by a central stalk formed by the gamma and epsilon chains, while a peripheral stalk is formed by the delta, b and b' chains.

The protein localises to the plastid. The protein resides in the chloroplast thylakoid membrane. Functionally, f(1)F(0) ATP synthase produces ATP from ADP in the presence of a proton or sodium gradient. F-type ATPases consist of two structural domains, F(1) containing the extramembraneous catalytic core and F(0) containing the membrane proton channel, linked together by a central stalk and a peripheral stalk. During catalysis, ATP synthesis in the catalytic domain of F(1) is coupled via a rotary mechanism of the central stalk subunits to proton translocation. Its function is as follows. Key component of the F(0) channel; it plays a direct role in translocation across the membrane. A homomeric c-ring of between 10-14 subunits forms the central stalk rotor element with the F(1) delta and epsilon subunits. The chain is ATP synthase subunit c, chloroplastic from Pelargonium hortorum (Common geranium).